A 304-amino-acid polypeptide reads, in one-letter code: Recombination-associated protein RdgC (304 aa).

This sequence belongs to the RdgC family.

It localises to the cytoplasm. It is found in the nucleoid. In terms of biological role, may be involved in recombination. The sequence is that of Recombination-associated protein RdgC from Shewanella baltica (strain OS185).